The primary structure comprises 80 residues: Cytochrome c oxidase subunit 7A1, mitochondrial (80 aa).

The transit peptide at 1 to 21 (MRALRVSQALVRSFSSSTRSH) directs the protein to the mitochondrion. At 22–46 (LENRVAEKQKLFQADNDLPVHLKGG) the chain is on the mitochondrial matrix side. Residues 47-75 (GMDNVLYRLTMTLTLGGTAYCLYCLGWAS) traverse the membrane as a helical segment. The Mitochondrial intermembrane segment spans residues 76-80 (FPHKK).

This sequence belongs to the cytochrome c oxidase VIIa family. In terms of assembly, component of the complex IV (CIV, cytochrome c oxidase), a multisubunit enzyme composed of 14 subunits. The complex is composed of a catalytic core of 3 subunits MT-CO1, MT-CO2 and MT-CO3, encoded in the mitochondrial DNA, and 11 supernumerary subunits COX4I, COX5A, COX5B, COX6A, COX6B, COX6C, COX7A, COX7B, COX7C, COX8 and NDUFA4, which are encoded in the nuclear genome. The complex exists as a monomer or a dimer and forms supercomplexes (SCs) in the inner mitochondrial membrane with NADH-ubiquinone oxidoreductase (complex I, CI) and ubiquinol-cytochrome c oxidoreductase (cytochrome b-c1 complex, complex III, CIII), resulting in different assemblies (supercomplex SCI(1)III(2)IV(1) and megacomplex MCI(2)III(2)IV(2)).

It is found in the mitochondrion inner membrane. Its pathway is energy metabolism; oxidative phosphorylation. Functionally, component of the mitochondrial respiratory complex IV (CIV, also named cytochrome c oxidase complex), the last enzyme in the mitochondrial electron transport chain which drives oxidative phosphorylation. The CIV complex is the component of the respiratory chain that catalyzes the reduction of oxygen to water. Acts as an assembly factor that specifically drives the homodimerization of CIV complexes, mediating the formation of mitochondrial respiratory supercomplexes (respirasomes) containing two CIV: supercomplxes with two molecules of CIV show improved activity. Despite being highly expressed in brown adipose tissue, not required for thermogenesis. This is Cytochrome c oxidase subunit 7A1, mitochondrial from Mus musculus (Mouse).